We begin with the raw amino-acid sequence, 254 residues long: Type III pantothenate kinase (254 aa).

An ATP-binding site is contributed by Asp-6–Thr-13. Substrate is bound by residues Tyr-100 and Gly-107 to Arg-110. The active-site Proton acceptor is the Asp-109. Asp-129 contributes to the K(+) binding site. Thr-132 contacts ATP. Position 184 (Thr-184) interacts with substrate.

It belongs to the type III pantothenate kinase family. As to quaternary structure, homodimer. Requires NH4(+) as cofactor. K(+) is required as a cofactor.

It localises to the cytoplasm. The catalysed reaction is (R)-pantothenate + ATP = (R)-4'-phosphopantothenate + ADP + H(+). The protein operates within cofactor biosynthesis; coenzyme A biosynthesis; CoA from (R)-pantothenate: step 1/5. In terms of biological role, catalyzes the phosphorylation of pantothenate (Pan), the first step in CoA biosynthesis. This chain is Type III pantothenate kinase, found in Anaeromyxobacter dehalogenans (strain 2CP-1 / ATCC BAA-258).